Here is a 123-residue protein sequence, read N- to C-terminus: Small ribosomal subunit protein uS13 (123 aa).

The protein belongs to the universal ribosomal protein uS13 family. Part of the 30S ribosomal subunit. Forms a loose heterodimer with protein S19. Forms two bridges to the 50S subunit in the 70S ribosome.

Functionally, located at the top of the head of the 30S subunit, it contacts several helices of the 16S rRNA. In the 70S ribosome it contacts the 23S rRNA (bridge B1a) and protein L5 of the 50S subunit (bridge B1b), connecting the 2 subunits; these bridges are implicated in subunit movement. Contacts the tRNAs in the A and P-sites. In Anaplasma marginale (strain St. Maries), this protein is Small ribosomal subunit protein uS13.